An 869-amino-acid chain; its full sequence is Phosphatidylethanolamine N-methyltransferase (869 aa).

Ser-2 carries the N-acetylserine modification. The Lumenal portion of the chain corresponds to 2–55 (SSCKTTLSEMVGSVTKDRGTINVKARTRSSNVTFKPPVTHDMVRSLFDPTLKKS). The helical transmembrane segment at 56–76 (LLEKCIALAIISNFFICYWVF) threads the bilayer. Residues 77-86 (QRFGLQFTKY) are Cytoplasmic-facing. The chain crosses the membrane as a helical span at residues 87–107 (FFLVQYLFWRIAYNLGIGLVL). The Lumenal portion of the chain corresponds to 108–187 (HYQSHYETLT…EINVWLIFRQ (80 aa)). The chain crosses the membrane as a helical span at residues 188-208 (FVDLILMQDFVTYIIYVYLSI). At 209-212 (PYSW) the chain is on the cytoplasmic side. Residues 213 to 233 (VQIFNWRSLLGVILILFNIWV) form a helical membrane-spanning segment. The Lumenal segment spans residues 234–258 (KLDAHRVVKDYAWYWGDFFFLEESE). The helical transmembrane segment at 259–279 (LIFDGVFNISPHPMYSIGYLG) threads the bilayer. Residues 280–291 (YYGLSLICNDYK) lie on the Cytoplasmic side of the membrane. The helical transmembrane segment at 292–310 (VLLVSVFGHYSQFLFLKYV) threads the bilayer. Residues 311–362 (ENPHIERTYGDGTDSDSQMNSRIDDLISKENYDYSRPLINMGLSFNNFNKLR) lie on the Lumenal side of the membrane. A helical transmembrane segment spans residues 363 to 383 (FTDYFTIGTVAALMLGTIMNA). Residues 384 to 389 (RFINLN) are Cytoplasmic-facing. A helical transmembrane segment spans residues 390–410 (YLFITVFVTKLVSWLFISTIL). Topologically, residues 411 to 439 (YKQSQSKWFTRLFLENGYTQVYSYEQWQF) are lumenal. The chain crosses the membrane as a helical span at residues 440 to 460 (IYNYYLVLTYTLMIIYTGLQI). The Cytoplasmic segment spans residues 461 to 463 (WSN). The chain crosses the membrane as a helical span at residues 464 to 484 (FSNINNSQLIFGLILVALQTW). Residues 485–534 (CDKETRLAISDFGWFYGDFFLSNYISTRKLTSQGIYRYLNHPEAVLGVVG) lie on the Lumenal side of the membrane. The helical transmembrane segment at 535–555 (VWGTVLMTNFAVTNIILAVLW) threads the bilayer. Topologically, residues 556-869 (TLTNFILVKF…DIKQTLDSLA (314 aa)) are cytoplasmic.

Belongs to the class VI-like SAM-binding methyltransferase superfamily. CHO2 family.

It is found in the endoplasmic reticulum membrane. It catalyses the reaction a 1,2-diacyl-sn-glycero-3-phosphoethanolamine + S-adenosyl-L-methionine = a 1,2-diacyl-sn-glycero-3-phospho-N-methylethanolamine + S-adenosyl-L-homocysteine + H(+). The protein operates within phospholipid metabolism; phosphatidylcholine biosynthesis. Its function is as follows. Catalyzes the first step of the methylation pathway of phosphatidylcholine biosynthesis, the SAM-dependent methylation of phosphatidylethanolamine (PE) to phosphatidylmonomethylethanolamine (PMME). The sequence is that of Phosphatidylethanolamine N-methyltransferase (CHO2) from Saccharomyces cerevisiae (strain AWRI1631) (Baker's yeast).